The sequence spans 420 residues: Tryptophan synthase beta chain (420 aa).

N6-(pyridoxal phosphate)lysine is present on K112.

This sequence belongs to the TrpB family. In terms of assembly, tetramer of two alpha and two beta chains. The cofactor is pyridoxal 5'-phosphate.

It carries out the reaction (1S,2R)-1-C-(indol-3-yl)glycerol 3-phosphate + L-serine = D-glyceraldehyde 3-phosphate + L-tryptophan + H2O. The protein operates within amino-acid biosynthesis; L-tryptophan biosynthesis; L-tryptophan from chorismate: step 5/5. Its function is as follows. The beta subunit is responsible for the synthesis of L-tryptophan from indole and L-serine. This Thermosipho africanus (strain TCF52B) protein is Tryptophan synthase beta chain.